Consider the following 301-residue polypeptide: uncharacterized protein (301 aa).

At 1 to 5 the chain is on the extracellular side; that stretch reads MSYKK. A helical membrane pass occupies residues 6–26; it reads FVYFINLFFLLGATLLTFFLI. Topologically, residues 27-112 are cytoplasmic; it reads LAGGRTTGVL…NRNAYYYLSR (86 aa). A helical transmembrane segment spans residues 113-133; that stretch reads VGWAMLLIGLFFLLITLVSVI. The Extracellular portion of the chain corresponds to 134 to 143; sequence ASLIRYNRRT. Residues 144–164 traverse the membrane as a helical segment; it reads AALATAMSWITLFFITLSACL. Over 165-191 the chain is Cytoplasmic; it reads YTGCYAKAVKAFHHENRDARLGPKNFG. The chain crosses the membrane as a helical span at residues 192 to 212; it reads LIWTTVFLLIVNAICCTIMVA. Over 213-301 the chain is Extracellular; that stretch reads THKRNEYIYD…YTEQNVPVVS (89 aa). The interval 254 to 301 is disordered; sequence VQQSQSHQNHRFFKKLRTKKRTVTSAGDEPDRVQEERVYTEQNVPVVS. Positions 261-275 are enriched in basic residues; sequence QNHRFFKKLRTKKRT. Residues 282–292 are compositionally biased toward basic and acidic residues; the sequence is EPDRVQEERVY.

It belongs to the SUR7 family.

Its subcellular location is the cell membrane. Its function is as follows. Involved in sporulation and affects the sphingolipid composition of the plasma membrane. This is an uncharacterized protein from Saccharomyces cerevisiae (strain ATCC 204508 / S288c) (Baker's yeast).